A 360-amino-acid chain; its full sequence is Protein NDRG2 (360 aa).

The interval Ser-324–Cys-360 is disordered.

This sequence belongs to the NDRG family.

The protein resides in the cytoplasm. In terms of biological role, contributes to the regulation of the Wnt signaling pathway. Down-regulates CTNNB1-mediated transcriptional activation of target genes. May be involved in neuron differentiation. In Xenopus laevis (African clawed frog), this protein is Protein NDRG2 (ndrg2).